The chain runs to 158 residues: UPF0725 protein At3g57210 (158 aa).

This sequence belongs to the UPF0725 (EMB2204) family.

This Arabidopsis thaliana (Mouse-ear cress) protein is UPF0725 protein At3g57210.